A 146-amino-acid polypeptide reads, in one-letter code: UPF0735 ACT domain-containing protein Cphy_3604 (146 aa).

An ACT domain is found at 70 to 145 (TFMLQMDDIP…GIHYLKILGR (76 aa)).

The protein belongs to the UPF0735 family.

In Lachnoclostridium phytofermentans (strain ATCC 700394 / DSM 18823 / ISDg) (Clostridium phytofermentans), this protein is UPF0735 ACT domain-containing protein Cphy_3604.